A 70-amino-acid chain; its full sequence is Conotoxin Cl9.1 (70 aa).

An N-terminal signal peptide occupies residues 1–20 (MMGKLGVVLFICLVLFPLET). A propeptide spanning residues 21 to 50 (LQLEGGQQADRHVDQLEGNPNRETRTIEVR) is cleaved from the precursor. 3 cysteine pairs are disulfide-bonded: C51–C63, C56–C67, and C61–C70.

This sequence belongs to the conotoxin M superfamily. Expressed by the venom duct.

It is found in the secreted. The protein is Conotoxin Cl9.1 of Californiconus californicus (California cone).